The chain runs to 44 residues: Antimicrobial peptide 1b (44 aa).

The region spanning 1 to 42 (AQKCGEQGRGAKCPNCLCCGRYGFCGSTPDYCGVGCQSQCRG) is the Chitin-binding type-1 domain. Cystine bridges form between cysteine 4-cysteine 19, cysteine 13-cysteine 25, cysteine 16-cysteine 43, cysteine 18-cysteine 32, and cysteine 36-cysteine 40.

In terms of processing, contains 5 disulfide bonds.

Binds chitin. Has antifungal activity against F.oxysporum 16/10 (IC(50)=4.1 uM) and B.sorokiniana 6/10 (IC(50)=2.7 uM). Inhibits germination of fungal spores. This Leymus arenarius (Lyme grass) protein is Antimicrobial peptide 1b.